Consider the following 231-residue polypeptide: uncharacterized protein (231 aa).

Residues 1 to 10 (MDGKKREVEN) show a composition bias toward basic and acidic residues. The segment at 1-35 (MDGKKREVENGKNGNNIKDGNSSNTTNYGKDTKTT) is disordered. Low complexity predominate over residues 11 to 24 (GKNGNNIKDGNSSN). Residues 25–35 (TTNYGKDTKTT) are compositionally biased toward polar residues.

This is an uncharacterized protein from Aquifex aeolicus (strain VF5).